A 78-amino-acid chain; its full sequence is Calcium/calmodulin-dependent protein kinase II inhibitor 1 (78 aa).

The CAMK2 inhibitory domain stretch occupies residues 41–68; it reads SKRPPKLGQIGRSKRVVIEDDRIDDVLK.

This sequence belongs to the CAMK2N family. Interacts with CAMK2B; the presence of Ca(2+)/calmodulin increases the interaction but is not essential. Interacts with CAMK2A; this interaction requires CAMK2A activation by Ca(2+). As to expression, expressed in the brain (at protein level). Expressed in cardiomyocytes but not cardiac fibroblasts (at protein level).

The protein resides in the synapse. The protein localises to the cell projection. It is found in the dendrite. Its subcellular location is the postsynaptic density. Potent and specific inhibitor of CaM-kinase II (CAMK2). Plays a role in the maintenance of long-term retrieval-induced memory in response to contextual fear. Modulates blood pressure and vascular reactivity via regulation of CAMK2 activity in addition to regulation of left ventricular mass. Mediates the NLRP3 inflammasome in cardiomyocytes via acting as an inhibitor of the MAPK14/p38 and MAPK8/JNK pathways, thereby regulating ventricular remodeling and cardiac rhythm post-myocardial infarction. Negatively effects insulin sensitivity and promotes lipid formation in adipose tissues independent of CAMK2 signaling. This Mus musculus (Mouse) protein is Calcium/calmodulin-dependent protein kinase II inhibitor 1 (Camk2n1).